Here is an 88-residue protein sequence, read N- to C-terminus: Exodeoxyribonuclease 7 small subunit (88 aa).

A disordered region spans residues 69 to 88; sequence DPMRPDDGEPFDPSIVSTSQ.

The protein belongs to the XseB family. In terms of assembly, heterooligomer composed of large and small subunits.

The protein localises to the cytoplasm. The enzyme catalyses Exonucleolytic cleavage in either 5'- to 3'- or 3'- to 5'-direction to yield nucleoside 5'-phosphates.. Functionally, bidirectionally degrades single-stranded DNA into large acid-insoluble oligonucleotides, which are then degraded further into small acid-soluble oligonucleotides. The chain is Exodeoxyribonuclease 7 small subunit from Xylella fastidiosa (strain M12).